Consider the following 519-residue polypeptide: uncharacterized protein (519 aa).

Helical transmembrane passes span 52 to 72 (IYFLILLYLIQGVPMGLVRGS), 86 to 106 (LATYSLAAYPYSLKVLWSPIV), 119 to 139 (TWVVPCMLLISSTLLLFSYNV), 156 to 176 (WSFLLVFVCATQDIAVDGWSL), 199 to 219 (FFLSFTILLVFTSPEFANTFI), 231 to 251 (LSGYIKFWAYFTFIASVLVCF), 313 to 333 (MLSLIILINFPLGLALGVYTG), 343 to 363 (IWLKGYWGRVVSILLNTILVY), 374 to 394 (VFFPIFLCYTLNASFSTIQFV), 408 to 430 (IGGTYMTILNTLSNLGGSWPQYV), and 477 to 497 (TSIVGIFLAISICVSLITPVV).

It localises to the membrane. This is an uncharacterized protein from Schizosaccharomyces pombe (strain 972 / ATCC 24843) (Fission yeast).